We begin with the raw amino-acid sequence, 607 residues long: Monocarboxylate transporter 7 (607 aa).

Residues 1–84 (MRASGQGPQR…PAETGCSRSR (84 aa)) form a disordered region. Residues 1-105 (MRASGQGPQR…ANVYTQVPDG (105 aa)) lie on the Cytoplasmic side of the membrane. Residues 106–126 (GWGWAVAVSFFFVEVFTYGII) form a helical membrane-spanning segment. At 127-146 (KSFGVFFNDLMDSFDESNSK) the chain is on the extracellular side. A helical transmembrane segment spans residues 147 to 167 (ISWIISICVFVLTFTAPLSTV). Topologically, residues 168–175 (LSNRFGHR) are cytoplasmic. The chain crosses the membrane as a helical span at residues 176–196 (LVVMAGGLLISLGMITASFSQ). The Extracellular portion of the chain corresponds to 197 to 202 (RVYHMY). The helical transmembrane segment at 203–223 (ISIGVISGLGYCFSFLPTVTI) threads the bilayer. Residues 224-233 (LSQYFDKRRS) lie on the Cytoplasmic side of the membrane. Residues 234 to 254 (VVTAVASTGECFAVFAFAPAI) form a helical membrane-spanning segment. At 255-268 (TALKEHIGWRYSLL) the chain is on the extracellular side. A helical membrane pass occupies residues 269 to 289 (FVGLLQLNIMVCGALLRPIII). The Cytoplasmic segment spans residues 290–383 (QGPGQSPKAV…KEKSFICYAL (94 aa)). Residues Ser-319, Ser-322, Ser-325, and Ser-332 each carry the phosphoserine modification. A helical transmembrane segment spans residues 384-404 (FGLFATLGFFAPSLYIIPLGI). Over 405 to 414 (SLGIDPDRAA) the chain is Extracellular. The chain crosses the membrane as a helical span at residues 415 to 435 (FLLSTMAIAEVFGRIGAGFVL). Topologically, residues 436–442 (NREPIRK) are cytoplasmic. Residues 443–463 (IYIELICVILLTASLFAFTFA) traverse the membrane as a helical segment. Residues 464 to 465 (TE) are Extracellular-facing. The chain crosses the membrane as a helical span at residues 466 to 486 (FWGLMLCSVFFGSMVGTIGGT). Residues 487-507 (HIPMLAEDDVVGIEKMSSAAG) are Cytoplasmic-facing. The chain crosses the membrane as a helical span at residues 508–528 (VYVFIQSISGLAGPPLAGLLV). At 529–536 (DQSKIYSR) the chain is on the extracellular side. The helical transmembrane segment at 537–557 (AFYSCAAGMCLAAVCLALVRP) threads the bilayer. Topologically, residues 558 to 607 (CKKGLCQNSHSGENQTDRQRGKALQDIPEDFLEMDLGKCEHRAHMKMDPV) are cytoplasmic.

The protein belongs to the major facilitator superfamily. Monocarboxylate porter (TC 2.A.1.13) family. In terms of assembly, forms functional complexes with BSG/CD147 or EMB/GP70 ancillary proteins.

It is found in the basolateral cell membrane. It carries out the reaction taurine(out) = taurine(in). In terms of biological role, monocarboxylate transporter selective for taurine. May associate with BSG/CD147 or EMB/GP70 ancillary proteins to mediate facilitative efflux or influx of taurine across the plasma membrane. The transport is pH- and sodium-independent. Rather low-affinity, is likely effective for taurine transport in tissues where taurine is present at high concentrations. This chain is Monocarboxylate transporter 7, found in Mus musculus (Mouse).